A 1295-amino-acid polypeptide reads, in one-letter code: Phosphoribosylformylglycinamidine synthase (1295 aa).

The interval W305–K327 is disordered. Residues G307 to D318 and A678 each bind ATP. Residues E718, N722, and D884 each coordinate Mg(2+). S886 contributes to the ATP binding site. The Glutamine amidotransferase type-1 domain maps to V1042–G1295. C1135 (nucleophile) is an active-site residue. Catalysis depends on residues H1260 and E1262.

It in the N-terminal section; belongs to the FGAMS family. Monomer.

Its subcellular location is the cytoplasm. It catalyses the reaction N(2)-formyl-N(1)-(5-phospho-beta-D-ribosyl)glycinamide + L-glutamine + ATP + H2O = 2-formamido-N(1)-(5-O-phospho-beta-D-ribosyl)acetamidine + L-glutamate + ADP + phosphate + H(+). The protein operates within purine metabolism; IMP biosynthesis via de novo pathway; 5-amino-1-(5-phospho-D-ribosyl)imidazole from N(2)-formyl-N(1)-(5-phospho-D-ribosyl)glycinamide: step 1/2. Phosphoribosylformylglycinamidine synthase involved in the purines biosynthetic pathway. Catalyzes the ATP-dependent conversion of formylglycinamide ribonucleotide (FGAR) and glutamine to yield formylglycinamidine ribonucleotide (FGAM) and glutamate. The protein is Phosphoribosylformylglycinamidine synthase of Escherichia coli O6:K15:H31 (strain 536 / UPEC).